The primary structure comprises 394 residues: Uroporphyrinogen decarboxylase 2, chloroplastic (394 aa).

Substrate contacts are provided by residues 74 to 78, phenylalanine 93, serine 123, aspartate 124, tyrosine 201, serine 256, and histidine 371; that span reads RQAGR.

Belongs to the uroporphyrinogen decarboxylase family. As to quaternary structure, homodimer.

It localises to the plastid. The protein localises to the chloroplast. It carries out the reaction uroporphyrinogen III + 4 H(+) = coproporphyrinogen III + 4 CO2. Its pathway is porphyrin-containing compound metabolism; protoporphyrin-IX biosynthesis; coproporphyrinogen-III from 5-aminolevulinate: step 4/4. It functions in the pathway porphyrin-containing compound metabolism; chlorophyll biosynthesis. In terms of biological role, catalyzes the decarboxylation of four acetate groups of uroporphyrinogen-III to yield coproporphyrinogen-III. This Arabidopsis thaliana (Mouse-ear cress) protein is Uroporphyrinogen decarboxylase 2, chloroplastic (HEME2).